Here is a 187-residue protein sequence, read N- to C-terminus: uncharacterized protein (187 aa).

This is an uncharacterized protein from Saccharomyces cerevisiae (strain ATCC 204508 / S288c) (Baker's yeast).